Consider the following 246-residue polypeptide: Probable transcriptional regulatory protein YebC (246 aa).

Residues 1-20 (MAGHSKWANTRHRKAAQDAK) are disordered.

It belongs to the TACO1 family.

Its subcellular location is the cytoplasm. This Escherichia coli O6:K15:H31 (strain 536 / UPEC) protein is Probable transcriptional regulatory protein YebC.